The primary structure comprises 914 residues: DNA mismatch repair protein MutS (914 aa).

Residues 1-24 (MDNKTDNKNNLTPQSAPSSAPHKE) are disordered. A compositionally biased stretch (polar residues) spans 8-18 (KNNLTPQSAPS). 662–669 (GPNMGGKS) lines the ATP pocket.

It belongs to the DNA mismatch repair MutS family.

This protein is involved in the repair of mismatches in DNA. It is possible that it carries out the mismatch recognition step. This protein has a weak ATPase activity. The sequence is that of DNA mismatch repair protein MutS from Bartonella henselae (strain ATCC 49882 / DSM 28221 / CCUG 30454 / Houston 1) (Rochalimaea henselae).